The primary structure comprises 359 residues: Nicotinate-nucleotide--dimethylbenzimidazole phosphoribosyltransferase (359 aa).

Catalysis depends on glutamate 318, which acts as the Proton acceptor.

It belongs to the CobT family. Homodimer.

It carries out the reaction 5,6-dimethylbenzimidazole + nicotinate beta-D-ribonucleotide = alpha-ribazole 5'-phosphate + nicotinate + H(+). It participates in nucleoside biosynthesis; alpha-ribazole biosynthesis; alpha-ribazole from 5,6-dimethylbenzimidazole: step 1/2. Its function is as follows. Catalyzes the synthesis of alpha-ribazole-5'-phosphate from nicotinate mononucleotide (NAMN) and 5,6-dimethylbenzimidazole (DMB). The polypeptide is Nicotinate-nucleotide--dimethylbenzimidazole phosphoribosyltransferase (Escherichia coli O8 (strain IAI1)).